The chain runs to 387 residues: EARP-interacting protein homolog (387 aa).

5 WD repeats span residues 132–172 (TAHG…SKAV), 182–222 (KGQL…QIYC), 226–266 (AHGQ…DPVK), 270–310 (EHSH…SEPF), and 345–385 (EHED…KYHI).

This sequence belongs to the WD repeat EIPR1 family.

The polypeptide is EARP-interacting protein homolog (Gekko japonicus (Schlegel's Japanese gecko)).